A 647-amino-acid chain; its full sequence is Pumilio homolog 3 (647 aa).

Residues 1–10 (MEVKGKKKIT) show a composition bias toward basic residues. The interval 1 to 123 (MEVKGKKKIT…KKKKELKQNR (123 aa)) is disordered. N6-acetyllysine is present on K33. Residues 59 to 68 (PGKKRVKQFK) show a composition bias toward basic residues. Over residues 93-123 (FQPDGKSDESAAKKPKWDDFKKKKKELKQNR) the composition is skewed to basic and acidic residues. The Nuclear localization signal motif lies at 105-117 (KKPKWDDFKKKKK). One can recognise a PUM-HD domain in the interval 142–509 (ESLRRKDCDK…VVLDKSVCVL (368 aa)). Pumilio repeat units follow at residues 176 to 211 (HDST…LSKA), 212 to 247 (KYSR…MLRH), 248 to 276 (SEAS…ELYG), 288 to 324 (PTLE…VIKH), 325 to 360 (SLVH…LAHT), 361 to 396 (HDGA…IANG), 397 to 434 (QYSH…IVND), 435 to 503 (KYGR…VVLD), 504 to 550 (KSVC…IAEH), 551 to 595 (PAGH…WASI), and 596 to 635 (NRGA…KSTS).

Interacts with PARP1 (via catalytic domain).

Its subcellular location is the nucleus. The protein resides in the nucleolus. It is found in the nucleoplasm. It localises to the chromosome. Inhibits the poly(ADP-ribosyl)ation activity of PARP1 and the degradation of PARP1 by CASP3 following genotoxic stress. Binds to double-stranded RNA or DNA without sequence specificity. Involved in development of the eye and of primordial germ cells. The polypeptide is Pumilio homolog 3 (Rattus norvegicus (Rat)).